Consider the following 188-residue polypeptide: Nicotinamide/nicotinic acid mononucleotide adenylyltransferase (188 aa).

The protein belongs to the archaeal NMN adenylyltransferase family.

It carries out the reaction beta-nicotinamide D-ribonucleotide + ATP + H(+) = diphosphate + NAD(+). The catalysed reaction is nicotinate beta-D-ribonucleotide + ATP + H(+) = deamido-NAD(+) + diphosphate. Its pathway is cofactor biosynthesis; NAD(+) biosynthesis; NAD(+) from nicotinamide D-ribonucleotide: step 1/1. The protein operates within cofactor biosynthesis; NAD(+) biosynthesis; deamido-NAD(+) from nicotinate D-ribonucleotide: step 1/1. In terms of biological role, dual substrate specificity enzyme that catalyzes the formation of NAD(+) from nicotinamide mononucleotide (NMN) and the formation of deamido-NAD(+) (NaAD) from nicotinate mononucleotide (NaMN). Shows nearly identical catalytic efficiency for both physiological substrates. Plays an essential role in all three routes of NAD biogenesis, de novo synthesis as well as the deamidating and nondeamidating salvage pathways. The chain is Nicotinamide/nicotinic acid mononucleotide adenylyltransferase from Acinetobacter baylyi (strain ATCC 33305 / BD413 / ADP1).